A 1030-amino-acid polypeptide reads, in one-letter code: Alpha-L-rhamnosidase (1030 aa).

The segment at 133–297 is carbohydrate-binding module-67 (CBM67); sequence PSLEGSSWIW…GAGPWGRVAP (165 aa). Asp-179 and Asn-180 together coordinate Ca(2+). Residues 179–180 and Trp-203 contribute to the alpha-L-rhamnose site; that span reads DN. 2 residues coordinate Ca(2+): Asn-228 and Pro-233. Residues Asp-630, 634–636, Asp-643, and Trp-695 each bind alpha-L-rhamnose; that span reads RDE. Glu-636 acts as the Proton donor in catalysis. The active-site Proton acceptor is Glu-895. His-916 serves as a coordination point for alpha-L-rhamnose.

This sequence belongs to the glycosyl hydrolase 78 family.

The catalysed reaction is Hydrolysis of terminal non-reducing alpha-L-rhamnose residues in alpha-L-rhamnosides.. Alpha-L-rhamnosidase which is able to degrade p-nitrophenyl-alpha-L-rhamnopyranoside (PNP-Rha) in vitro. Releases L-rhamnose from citrus flavonoids such as naringin, rutin and hesperidin, and the arabinogalactan-protein (AGP) gum arabic. AGPs are a family of proteoglycans that are localized on the cell surfaces of higher plants. Cleaves both the alpha-1,6 and the alpha-1,2-linked rhamnosyl residues. In Streptomyces avermitilis (strain ATCC 31267 / DSM 46492 / JCM 5070 / NBRC 14893 / NCIMB 12804 / NRRL 8165 / MA-4680), this protein is Alpha-L-rhamnosidase.